The sequence spans 678 residues: Putative cyclic nucleotide-gated ion channel 15 (678 aa).

The Cytoplasmic portion of the chain corresponds to 1–81 (MGYGNSRSVR…RGQTIRRWNK (81 aa)). Residues 82-102 (IFLIACLVSLFVDPLFFFLPV) traverse the membrane as a helical segment. Residues 103–115 (MRNEACITIGVRL) are Extracellular-facing. A helical membrane pass occupies residues 116–136 (EVVLTLIRSLADAFYIAQILI). The Cytoplasmic segment spans residues 137–170 (RFRTAYIAPPSRVFGRGELVIDSRKIAWRYLHKS). A helical transmembrane segment spans residues 171-191 (FWIHLVAALPLPQVLIWIIIP). Over 192 to 203 (NLRGSPMTNTKN) the chain is Extracellular. The chain crosses the membrane as a helical span at residues 204–224 (VLRFIIIFQYVPRMFLIFPLS). At 225 to 245 (RQIIKATGVVTETAWAGAAYN) the chain is on the cytoplasmic side. A helical transmembrane segment spans residues 246-266 (LMLYMLASHVLGACWYLLAVE). At 267–364 (RQEACWRHAC…GQNLATSTYA (98 aa)) the chain is on the extracellular side. The helical transmembrane segment at 365–385 (GEILFAIIIATLGLVLFALLI) threads the bilayer. Residues 386 to 678 (GNMQTYLQST…KPVEPDFSSE (293 aa)) lie on the Cytoplasmic side of the membrane. A nucleoside 3',5'-cyclic phosphate contacts are provided by residues 471 to 595 (LFDQ…TKQL) and Glu542. The calmodulin-binding stretch occupies residues 587–602 (FRRLHTKQLRHKFRFY). One can recognise an IQ domain in the interval 607–638 (RTWAACFIQAAWRRHRKRKYKTELRAKEEFHY). Positions 656 to 668 (RSGSDSGMMSSIQ) are enriched in polar residues. Positions 656 to 678 (RSGSDSGMMSSIQKPVEPDFSSE) are disordered.

The protein belongs to the cyclic nucleotide-gated cation channel (TC 1.A.1.5) family. Homotetramer or heterotetramer.

The protein resides in the cell membrane. Functionally, putative cyclic nucleotide-gated ion channel. This is Putative cyclic nucleotide-gated ion channel 15 (CNGC15) from Arabidopsis thaliana (Mouse-ear cress).